The sequence spans 296 residues: Cytidine deaminase (296 aa).

CMP/dCMP-type deaminase domains follow at residues 47 to 167 (EESE…FGPS) and 186 to 296 (DSSD…IDPA). 88–90 (NLE) serves as a coordination point for substrate. His101 serves as a coordination point for Zn(2+). Glu103 serves as the catalytic Proton donor. Cys128 and Cys131 together coordinate Zn(2+).

The protein belongs to the cytidine and deoxycytidylate deaminase family. Homodimer. Requires Zn(2+) as cofactor.

The enzyme catalyses cytidine + H2O + H(+) = uridine + NH4(+). The catalysed reaction is 2'-deoxycytidine + H2O + H(+) = 2'-deoxyuridine + NH4(+). In terms of biological role, this enzyme scavenges exogenous and endogenous cytidine and 2'-deoxycytidine for UMP synthesis. This Shewanella woodyi (strain ATCC 51908 / MS32) protein is Cytidine deaminase.